The primary structure comprises 615 residues: NEDD8 ultimate buster 1 (615 aa).

2 coiled-coil regions span residues 36 to 70 and 152 to 203; these read LALK…AIER and KAMV…AAET. UBA domains are found at residues 374–413, 424–470, and 489–529; these read YIDP…HITN, EEKE…LLSN, and SPSQ…LAHN. The Nuclear localization signal motif lies at 414–431; that stretch reads RREELAQIRKEEKEKKRR. Positions 427–474 are NEDD8-binding 1; that stretch reads EKKRRRLENIRFLKGMGYSTHAAQQVLHAASGNLDEALKILLSNPQMW. The disordered stretch occupies residues 532-586; the sequence is SLPPELPLSPEDSLSPPATSPSDSAGTSSASTDEDMETEAVNEILEDIPEHEEDY. Residues 539–562 are compositionally biased toward low complexity; sequence LSPEDSLSPPATSPSDSAGTSSAS. An NEDD8-binding 2 region spans residues 550–598; the sequence is TSPSDSAGTSSASTDEDMETEAVNEILEDIPEHEEDYLDSTLEDEEIII. The segment covering 563-586 has biased composition (acidic residues); it reads TDEDMETEAVNEILEDIPEHEEDY.

In terms of assembly, directly interacts with NEDD8 and PSMD4/S5a, a member of the regulatory subunit of the 26S proteasome. Isoform 1 binds to NEDD8 more efficiently than isoform 2. Interacts with AIPL1. The interaction with UBD via UBA domains facilitates the linking of UBD-conjugated target protein to the proteasome complex and accelerates UBD degradation and that of its conjugates. Widely expressed with lowest expression in the pancreas for isoform 1 and in leukocytes, liver, prostate and skeletal muscle for isoform 2.

It is found in the nucleus. Its function is as follows. Specific down-regulator of the NEDD8 conjugation system. Recruits NEDD8, UBD, and their conjugates to the proteasome for degradation. Isoform 1 promotes the degradation of NEDD8 more efficiently than isoform 2. This Homo sapiens (Human) protein is NEDD8 ultimate buster 1 (NUB1).